Reading from the N-terminus, the 142-residue chain is RNA polymerase-binding transcription factor DksA (142 aa).

Disordered stretches follow at residues 1–20 (MQTA…EDEP), 51–70 (HLQK…SSET), and 119–142 (RPTA…HRDD). The dksA C4-type zinc finger occupies 104–128 (CEETGEPIGLARLEARPTATMSVEA). Basic and acidic residues predominate over residues 128–142 (AQERHERRERVHRDD).

This sequence belongs to the DksA family. In terms of assembly, interacts directly with the RNA polymerase.

The protein resides in the cytoplasm. Its function is as follows. Transcription factor that acts by binding directly to the RNA polymerase (RNAP). Required for negative regulation of rRNA expression and positive regulation of several amino acid biosynthesis promoters. This Caulobacter vibrioides (strain ATCC 19089 / CIP 103742 / CB 15) (Caulobacter crescentus) protein is RNA polymerase-binding transcription factor DksA.